Here is a 128-residue protein sequence, read N- to C-terminus: CD59 glycoprotein (128 aa).

A signal peptide spans 1–25 (MGIQGGSVLFGLLLVLAVFCHSGHS). The UPAR/Ly6 domain maps to 26 to 108 (LQCYNCPNPT…QLENGGTSLS (83 aa)). Intrachain disulfides connect C28–C51, C31–C38, C44–C64, C70–C88, and C89–C94. The N-linked (GlcNAc...) asparagine glycan is linked to N43. Residue N102 is the site of GPI-anchor amidated asparagine attachment. Residues 103–128 (GGTSLSEKTVVLLVTLLLAAAWCLHP) constitute a propeptide, removed in mature form.

As to quaternary structure, interacts with T-cell surface antigen CD2. N- and O-glycosylated.

It localises to the cell membrane. The protein resides in the secreted. Potent inhibitor of the complement membrane attack complex (MAC) action, which protects self-cells from damage during complement activation. Acts by binding to the beta-haipins of C8 (C8A and C8B) components of the assembling MAC, forming an intermolecular beta-sheet that prevents incorporation of the multiple copies of C9 required for complete formation of the osmolytic pore. The chain is CD59 glycoprotein from Chlorocebus aethiops (Green monkey).